We begin with the raw amino-acid sequence, 358 residues long: MRTDLFDFDLPQGAIALRPASPRDAARMLVVEASGALHDRVVSELPEWLRPGDALVVNDTKVIAAQLTGRRIGRDTEPKIDATLIKRLDGSRWQALVKPAKKLLPGDIVRFGHDGRVCLLGQLDATVEAKGEAGEIILAFTLHGPVLDQAIAELGAPPLPPYIASKRAPDDRDAADYQTMFAANEGAVAAPTAGLHFTKALEQALAARGVTLHRVTLHVGAGTFLPVKTEDTAEHKMHAEWGCLSRETADALNAARAADGRIVAVGTTSLRLLESAAGDDGRLAPFADDTAIFITPGYRFKAVDVLMTNFHLPRSTLFMLVSAFAGLDTMQRAYAHAIKSGYRFYSYGDACLLFRNPS.

This sequence belongs to the QueA family. As to quaternary structure, monomer.

Its subcellular location is the cytoplasm. It catalyses the reaction 7-aminomethyl-7-carbaguanosine(34) in tRNA + S-adenosyl-L-methionine = epoxyqueuosine(34) in tRNA + adenine + L-methionine + 2 H(+). The protein operates within tRNA modification; tRNA-queuosine biosynthesis. Transfers and isomerizes the ribose moiety from AdoMet to the 7-aminomethyl group of 7-deazaguanine (preQ1-tRNA) to give epoxyqueuosine (oQ-tRNA). The sequence is that of S-adenosylmethionine:tRNA ribosyltransferase-isomerase from Rhodopseudomonas palustris (strain BisA53).